The sequence spans 1765 residues: Sodium channel protein type 11 subunit alpha (1765 aa).

At 1–126 (MEERYYPVIF…PIRSFMIRIS (126 aa)) the chain is on the cytoplasmic side. The I repeat unit spans residues 115–406 (FNPIRSFMIR…VTMAYEEQNR (292 aa)). Residues 127 to 148 (VHSVFSMFIICTVIINCMFMAN) traverse the membrane as a helical segment. Residue asparagine 149 is glycosylated (N-linked (GlcNAc...) asparagine). The Extracellular segment spans residues 149-159 (NSSVDSRPSSN). The helical transmembrane segment at 160 to 179 (IPEYVFIGIYVLEAVIKILA) threads the bilayer. Residues 180–191 (RGFIVDEFSYLR) are Cytoplasmic-facing. The helical transmembrane segment at 192-211 (DPWNWLDFIVIGTAIAPCFL) threads the bilayer. The Extracellular segment spans residues 212–219 (GNKVNNLS). N-linked (GlcNAc...) asparagine glycosylation is present at asparagine 217. A helical; Voltage-sensor transmembrane segment spans residues 220–239 (TLRTFRVLRALKAISVISGL). The Cytoplasmic segment spans residues 240–255 (KVIVGALLRSVKKLVD). Residues 256-269 (VMVLTLFCLSIFAL) form a helical membrane-spanning segment. At 270–342 (VGQQLFMGIL…PDYNYTNFDS (73 aa)) the chain is on the extracellular side. Cysteine 283 and cysteine 320 form a disulfide bridge. 3 N-linked (GlcNAc...) asparagine glycosylation sites follow: asparagine 303, asparagine 327, and asparagine 336. Residues 343–367 (FGWSFLAMFRVMTQDSWEKLYRQIL) constitute an intramembrane region (pore-forming). The Extracellular portion of the chain corresponds to 368-374 (RTSGIYF). Residues 375–400 (VFFFVVVIFLGSFYLLNLTLAVVTMA) form a helical membrane-spanning segment. Over 401–570 (YEEQNRNVAA…WLCIKKVLQT (170 aa)) the chain is Cytoplasmic. A disordered region spans residues 470–490 (RGSKTARASASDSEDDASKNP). One copy of the II repeat lies at 557-821 (CSPPWLCIKK…EGETRKTKVQ (265 aa)). The chain crosses the membrane as a helical span at residues 571–594 (IMTDPFTELAITICIIVNTVFLAM). Residues 595–605 (EHHNMDNSLKD) lie on the Extracellular side of the membrane. A helical membrane pass occupies residues 606-629 (ILKIGNWVFTGIFIAEMCLKIIAL). Over 630 to 637 (DPYHYFRH) the chain is Cytoplasmic. Residues 638-659 (GWNIFDSIVALVSLADVLFHKL) traverse the membrane as a helical segment. The Extracellular segment spans residues 660–664 (SKNLS). Residue asparagine 662 is glycosylated (N-linked (GlcNAc...) asparagine). A helical; Voltage-sensor membrane pass occupies residues 665 to 684 (FLASLRVLRVFKLAKSWPTL). The Cytoplasmic segment spans residues 685–699 (NTLIKIIGHSVGALG). The chain crosses the membrane as a helical span at residues 700 to 722 (NLTVVLTIVVFIFSVVGMRLFGA). Topologically, residues 723-742 (KFNKTCSTSPESLRRWHMGD) are extracellular. Asparagine 725 carries an N-linked (GlcNAc...) asparagine glycan. The pore-forming intramembrane region spans 743–763 (FYHSFLVVFRILCGEWIENMW). The Extracellular segment spans residues 764-773 (ECMQEMEGSP). Cysteine 765 and cysteine 775 form a disulfide bridge. Residues 774-799 (LCVIVFVLIMVVGKLVVLNLFIALLL) form a helical membrane-spanning segment. At 800–1030 (NSFSNEEKDG…WWNLRKTCYQ (231 aa)) the chain is on the cytoplasmic side. The segment at 850–869 (NSPKPNEATESFAGESRDTA) is disordered. An III repeat occupies 1023–1320 (NLRKTCYQIV…KKYYNAMKKL (298 aa)). The helical transmembrane segment at 1031-1053 (IVKHSWFESFIIFVILLSSGALI) threads the bilayer. Residues 1054–1067 (FEDVNLPSRPQVEK) lie on the Extracellular side of the membrane. A helical transmembrane segment spans residues 1068 to 1093 (LLKCTDNIFTFIFLLEMILKWVAFGF). At 1094 to 1099 (RKYFTS) the chain is on the cytoplasmic side. A helical membrane pass occupies residues 1100 to 1117 (AWCWLDFLIVVVSGLSLT). A topological domain (extracellular) is located at residue asparagine 1118. A helical; Voltage-sensor membrane pass occupies residues 1119-1140 (LPNLKSFRNLRALRPLRALSQF). Topologically, residues 1141–1159 (EGMKVVVNALMSAIPAILN) are cytoplasmic. The helical transmembrane segment at 1160–1181 (VLLVCLIFWLIFCILGVNFFSG) threads the bilayer. Residues 1182–1224 (KFGRCINGTDINKYFNASNVPNQSQCLVSNYTWKVPNVNFDNV) lie on the Extracellular side of the membrane. Asparagine 1188, asparagine 1197, asparagine 1203, and asparagine 1211 each carry an N-linked (GlcNAc...) asparagine glycan. An intramembrane region (pore-forming) is located at residues 1225 to 1246 (GNAYLALLQVATYKGWLDIMNA). Residues 1247 to 1262 (AVDSRGKDEQPAFEAN) lie on the Extracellular side of the membrane. The chain crosses the membrane as a helical span at residues 1263-1289 (LYAYLYFVVFIIFGSFFTLNLFIGVII). At 1290-1342 (DNFNQQQKKLGGQDIFMTEEQKKYYNAMKKLGTKKPQKPIPRPLNKCQAFVFD) the chain is on the cytoplasmic side. The stretch at 1329–1619 (IPRPLNKCQA…WEKFDPEATQ (291 aa)) is one IV repeat. Residues 1343–1366 (LVTSQVFDVIILGLIVTNMIIMMA) traverse the membrane as a helical segment. Residues 1367–1377 (ESEGQPNEVKK) lie on the Extracellular side of the membrane. Residues 1378 to 1401 (IFDILNIVFVVIFTVECLIKVFAL) form a helical membrane-spanning segment. The Cytoplasmic portion of the chain corresponds to 1402 to 1407 (RQHYFT). A helical transmembrane segment spans residues 1408–1431 (NGWNLFDCVVVVLSIISTLVSGLE). Over 1432 to 1440 (NSNVFPPTL) the chain is Extracellular. The helical; Voltage-sensor transmembrane segment at 1441–1463 (FRIVRLARIGRILRLVRAARGIR) threads the bilayer. At 1464–1478 (TLLFALMMSLPSLFN) the chain is on the cytoplasmic side. A helical membrane pass occupies residues 1479–1501 (IGLLLFLVMFIYAIFGMNWFSKV). Over 1502-1515 (KRGSGIDDIFNFDT) the chain is Extracellular. The segment at residues 1516–1538 (FSGSMLCLFQITTSAGWDALLNP) is an intramembrane region (pore-forming). At 1539–1559 (MLESKASCNSSSQESCQQPQI) the chain is on the extracellular side. A helical transmembrane segment spans residues 1560 to 1584 (AIVYFVSYIIISFLIVVNMYIAVIL). Residues 1585 to 1765 (ENFNTATEES…DVPKIKVHCD (181 aa)) are Cytoplasmic-facing.

The protein belongs to the sodium channel (TC 1.A.1.10) family. Nav1.9/SCN11A subfamily. In terms of assembly, the voltage-resistant sodium channel consists of an ion conducting pore forming alpha-subunit regulated by one or more auxiliary subunits SCN1B, SCN2B and SCN3B. Expressed in the dorsal root ganglia (C-fiber neurons), spinal cord, trigeminal ganglia, testis, ovary, uterus and small intestine.

The protein localises to the cell membrane. It carries out the reaction Na(+)(in) = Na(+)(out). Its function is as follows. Sodium channel mediating the voltage-dependent sodium ion permeability of excitable membranes. Assuming opened or closed conformations in response to the voltage difference across the membrane, the protein forms a sodium-selective channel through which sodium ions may pass in accordance with their electrochemical gradient. Involved in membrane depolarization during action potential in nociceptors which function as key relay stations for the electrical transmission of pain signals from the periphery to the central nervous system. Also involved in rapid BDNF-evoked neuronal depolarization. In Mus musculus (Mouse), this protein is Sodium channel protein type 11 subunit alpha.